Reading from the N-terminus, the 156-residue chain is Endoribonuclease YbeY (156 aa).

Zn(2+)-binding residues include H122, H126, and H132.

The protein belongs to the endoribonuclease YbeY family. It depends on Zn(2+) as a cofactor.

It localises to the cytoplasm. Single strand-specific metallo-endoribonuclease involved in late-stage 70S ribosome quality control and in maturation of the 3' terminus of the 16S rRNA. This Geobacillus kaustophilus (strain HTA426) protein is Endoribonuclease YbeY.